Consider the following 65-residue polypeptide: UPF0337 protein PA4738 (65 aa).

This sequence belongs to the UPF0337 (CsbD) family.

This is UPF0337 protein PA4738 from Pseudomonas aeruginosa (strain ATCC 15692 / DSM 22644 / CIP 104116 / JCM 14847 / LMG 12228 / 1C / PRS 101 / PAO1).